Here is a 251-residue protein sequence, read N- to C-terminus: Acidic leucine-rich nuclear phosphoprotein 32 family member B (251 aa).

LRR repeat units follow at residues 16-40 (PAAVRELVLDNCKSNDGKIEGLTAE), 43-64 (NLEFLSLINVGLISVSNLPKLP), and 65-84 (KLKKLELSENRIFGGLDMLA). Lys-86 carries the post-translational modification N6-acetyllysine. The LRR 4 repeat unit spans residues 89–110 (NLTHLNLSGNKLKDISTLEPLK). Positions 123–161 (CEVTNLNDYRESVFKLLPQLTYLDGYDREDQEAPDSDAE) constitute an LRRCT domain. The segment covering 149–233 (DREDQEAPDS…DEDEDEEEEE (85 aa)) has biased composition (acidic residues). The interval 149-251 (DREDQEAPDS…RETDDEGEDD (103 aa)) is disordered. The residue at position 158 (Ser-158) is a Phosphoserine. A compositionally biased stretch (basic and acidic residues) spans 234–244 (GGKGEKRKRET). The short motif at 239–242 (KRKR) is the Nuclear localization signal element. At Thr-244 the chain carries Phosphothreonine.

The protein belongs to the ANP32 family. As to quaternary structure, interacts with histones H3 and H4. Interacts with KLF5; this interaction induces promoter region-specific histone incorporation and inhibition of histone acetylation by ANP32B. In terms of assembly, (Microbial infection) Interacts with Sendai virus protein M. (Microbial infection) Interacts with Measles virus protein M. As to quaternary structure, (Microbial infection) Interacts with Hendra virus protein M; this interaction promotes nuclear localization of M. In terms of assembly, (Microbial infection) Interacts with influenza virus B protein PB2; this interaction strongly supports influenza B virus replication. Some glutamate residues are glycylated by TTLL8. This modification occurs exclusively on glutamate residues and results in a glycine chain on the gamma-carboxyl group. Post-translationally, directly cleaved by caspase-3/CASP3. In terms of tissue distribution, expressed in heart, lung, pancreas, prostate and in spleen, thymus and placenta.

It localises to the nucleus. The protein resides in the cytoplasm. In terms of biological role, multifunctional protein that is involved in the regulation of many processes including cell proliferation, apoptosis, cell cycle progression or transcription. Regulates the proliferation of neuronal stem cells, differentiation of leukemic cells and progression from G1 to S phase of the cell cycle. As negative regulator of caspase-3-dependent apoptosis, may act as an antagonist of ANP32A in regulating tissue homeostasis. Exhibits histone chaperone properties, able to recruit histones to certain promoters, thus regulating the transcription of specific genes. Also plays an essential role in the nucleocytoplasmic transport of specific mRNAs via the uncommon nuclear mRNA export receptor XPO1/CRM1. Participates in the regulation of adequate adaptive immune responses by acting on mRNA expression and cell proliferation. Its function is as follows. (Microbial infection) Plays an essential role in influenza A and B viral genome replication. Also plays a role in foamy virus mRNA export from the nucleus to the cytoplasm. In Homo sapiens (Human), this protein is Acidic leucine-rich nuclear phosphoprotein 32 family member B (ANP32B).